A 129-amino-acid chain; its full sequence is MAPRSLYLLAVLLFSANLFAGVGFAAAAEGPEDKGLTKGGKGKGGKGTKVSDDDTNGTDPDPEPEPEPEPEPEPEPEPEPEPEPEPEPEPEPEPEPEPEPEPEPEPGAATLKSVALPFAIAAVGLVAAF.

A signal peptide spans 1 to 27; the sequence is MAPRSLYLLAVLLFSANLFAGVGFAAA. Residues 27–111 are disordered; the sequence is AAEGPEDKGL…PEPEPGAATL (85 aa). Residues 53–104 show a composition bias toward acidic residues; that stretch reads DDTNGTDPDPEPEPEPEPEPEPEPEPEPEPEPEPEPEPEPEPEPEPEPEPEP. Asn56 carries N-linked (GlcNAc...) asparagine glycosylation. Repeat copies occupy residues 59–60, 61–62, 63–64, 65–66, 67–68, 69–70, 71–72, 73–74, 75–76, 77–78, 79–80, 81–82, 83–84, 85–86, 87–88, 89–90, 91–92, 93–94, 95–96, 97–98, 99–100, 101–102, 103–104, and 105–106. The segment at 59–106 is 24 X 2 AA tandem repeats of [DE]-P; the sequence is DPDPEPEPEPEPEPEPEPEPEPEPEPEPEPEPEPEPEPEPEPEPEPEP. Residue Gly107 is the site of GPI-anchor amidated glycine attachment. Positions 108–129 are excised as a propeptide; sequence AATLKSVALPFAIAAVGLVAAF.

The protein localises to the cell membrane. Its function is as follows. Major surface antigen of procyclic forms. The chain is Procyclic form-specific polypeptide A-beta (PARPA-BETA) from Trypanosoma brucei brucei.